Here is a 977-residue protein sequence, read N- to C-terminus: Short transient receptor potential channel 4 (977 aa).

The Cytoplasmic portion of the chain corresponds to 1–324 (MAQFYYKRNV…YDEFPGWRRR (324 aa)). ANK repeat units follow at residues 29–60 (LSPSEKAYLNAVEKGDYASVKKSLEEAEIYFK), 71–93 (RTALLIAIENENLELIELLLSFN), 96–118 (VGDALLHAIRKEVVGAVELLLNH), and 141–165 (PDITPIILAAHTNNYEIIKLLVQKG). 4 residues coordinate Zn(2+): His-172, Cys-176, Cys-178, and Cys-181. Positions 223–260 (LSWELQELSKVENEFKSEYEELSRQCKQFAKDLLDQTR) form a coiled coil. Residues 325 to 359 (HWAVKMVTCFIIGLLFPVFSVCYLIAPKSPLGLFI) constitute an intramembrane region (discontinuously helical). Residues 360–362 (RKP) are Cytoplasmic-facing. Residues 363 to 383 (FIKFICHTASYLTFLFLLLLA) form a helical membrane-spanning segment. Residues 384 to 403 (SQHIDRSDLNRQGPPPTIVE) lie on the Extracellular side of the membrane. The helical transmembrane segment at 404-418 (WMILPWVLGFIWGEI) threads the bilayer. 4 residues coordinate Ca(2+): Glu-417, Gln-420, Asn-435, and Asp-438. Topologically, residues 419–432 (KQMWDGGLQDYIHD) are cytoplasmic. Residues 433-453 (WWNLMDFVMNSLYLATISLKI) form a helical membrane-spanning segment. The Extracellular portion of the chain corresponds to 454–475 (VAFVKYSALNPRESWDMWHPTL). A helical membrane pass occupies residues 476–498 (VAEALFAIANIFSSLRLISLFTA). Residues 499-511 (NSHLGPLQISLGR) lie on the Cytoplasmic side of the membrane. The helical transmembrane segment at 512–534 (MLLDILKFLFIYCLVLLAFANGL) threads the bilayer. The Extracellular portion of the chain corresponds to 535-599 (NQLYFYYEET…HEFTEFVGAT (65 aa)). Residues Cys-549 and Cys-554 are joined by a disulfide bond. A helical transmembrane segment spans residues 600 to 620 (MFGTYNVISLVVLLNMLIAMM). The tract at residues 615–977 (MLIAMMNNSY…THEDYVTTRL (363 aa)) is interaction with ITPR1, ITPR2 and ITPR3. The Cytoplasmic segment spans residues 621-977 (NNSYQLIADH…THEDYVTTRL (357 aa)). The tract at residues 762–790 (IQSANASKESSNSADSDEKSDSEGNSKDK) is disordered. Over residues 764 to 775 (SANASKESSNSA) the composition is skewed to low complexity. A compositionally biased stretch (basic and acidic residues) spans 777–788 (SDEKSDSEGNSK). A phosphotyrosine; by FYN mark is found at Tyr-959 and Tyr-972. The segment at 975–977 (TRL) is PDZ-binding domain.

Belongs to the transient receptor (TC 1.A.4) family. STrpC subfamily. TRPC4 sub-subfamily. Homotetramer. Heterotetramer with TRPC1 and/or TRPC5. Forms a heteromeric ion channel with TRPC1, with a 1:3 TRPC1:TRPC4 stoichiometry. Interacts with TRPC4AP. Isoform alpha but not isoform beta interacts with ITPR1, ITPR2 and ITPR3. Interacts with (via PDZ-binding domain) with NHERF1. Interacts with MX1 and RNF24. Interacts (via CIRB domain) with SESTD1 (via spectrin 1 repeat). Interacts with CDH5 and CTNNB1. Interacts with SPTAN1 (via C-terminal spectrin repeats) and SPTBN5 (via C-terminus). Interacts (via protein 4.1-binding domain) with EPB41L2. Interacts with PLSCR1. In terms of processing, phosphorylation modulates TRPC channel function by regulating the level of TRPC4 at the cell surface and by increasing the association with NHERF1. As to expression, strongly expressed in placenta. Expressed at lower levels in heart, pancreas, kidney and brain. Expressed in endothelial cells. Isoform alpha was found to be the predominant isoform. Isoform beta was not found in pancreas and brain.

It localises to the cell membrane. The enzyme catalyses Ca(2+)(in) = Ca(2+)(out). It carries out the reaction Na(+)(in) = Na(+)(out). It catalyses the reaction Li(+)(in) = Li(+)(out). The catalysed reaction is Cs(+)(in) = Cs(+)(out). Its activity is regulated as follows. May be operated by a phosphatidylinositol second messenger system activated by receptor tyrosine kinases or G-protein coupled receptors. May be activated by intracellular calcium store depletion. Inhibited by xanthine-based inhibitor Pico145. Functionally, forms a receptor-activated non-selective calcium permeant cation channel. Acts as a cell-cell contact-dependent endothelial calcium entry channel. Forms a homomeric ion channel or a heteromeric ion channel with TRPC1; the heteromeric ion channel has reduced calcium permeability compared to the homomeric channel. Also permeable to monovalent ions including sodium, lithium and cesium ions. In terms of biological role, forms a receptor-activated non-selective calcium permeant cation channel. The polypeptide is Short transient receptor potential channel 4 (TRPC4) (Homo sapiens (Human)).